The sequence spans 251 residues: Aliphatic sulfonates import ATP-binding protein SsuB (251 aa).

Positions 3 to 231 (VSIDGVSKYF…PRSKTSESFQ (229 aa)) constitute an ABC transporter domain. 39-46 (GPSGCGKS) contacts ATP.

The protein belongs to the ABC transporter superfamily. Aliphatic sulfonates importer (TC 3.A.1.17.2) family. The complex is composed of two ATP-binding proteins (SsuB), two transmembrane proteins (SsuC) and a solute-binding protein (SsuA).

Its subcellular location is the cell membrane. The enzyme catalyses ATP + H2O + aliphatic sulfonate-[sulfonate-binding protein]Side 1 = ADP + phosphate + aliphatic sulfonateSide 2 + [sulfonate-binding protein]Side 1.. In terms of biological role, part of the ABC transporter complex SsuABC involved in aliphatic sulfonates import. Responsible for energy coupling to the transport system. In Bacillus cereus (strain ATCC 10987 / NRS 248), this protein is Aliphatic sulfonates import ATP-binding protein SsuB.